We begin with the raw amino-acid sequence, 100 residues long: Integration host factor subunit alpha (100 aa).

A disordered region spans residues 53–72; sequence FQLRDKPQRPGRNPKTGEEV.

This sequence belongs to the bacterial histone-like protein family. In terms of assembly, heterodimer of an alpha and a beta chain.

This protein is one of the two subunits of integration host factor, a specific DNA-binding protein that functions in genetic recombination as well as in transcriptional and translational control. In Neisseria gonorrhoeae (strain ATCC 700825 / FA 1090), this protein is Integration host factor subunit alpha.